We begin with the raw amino-acid sequence, 155 residues long: Small ribosomal subunit protein uS7cz/uS7cy (155 aa).

It belongs to the universal ribosomal protein uS7 family. As to quaternary structure, part of the 30S ribosomal subunit.

It is found in the plastid. It localises to the chloroplast. Functionally, one of the primary rRNA binding proteins, it binds directly to 16S rRNA where it nucleates assembly of the head domain of the 30S subunit. The chain is Small ribosomal subunit protein uS7cz/uS7cy (rps7-A) from Calycanthus floridus var. glaucus (Eastern sweetshrub).